The chain runs to 292 residues: Glycine--tRNA ligase alpha subunit (292 aa).

Belongs to the class-II aminoacyl-tRNA synthetase family. In terms of assembly, tetramer of two alpha and two beta subunits.

Its subcellular location is the cytoplasm. The enzyme catalyses tRNA(Gly) + glycine + ATP = glycyl-tRNA(Gly) + AMP + diphosphate. In Clostridioides difficile (strain 630) (Peptoclostridium difficile), this protein is Glycine--tRNA ligase alpha subunit.